The following is a 258-amino-acid chain: Intron-associated endonuclease 2 (258 aa).

One can recognise a GIY-YIG domain in the interval 14-96 (SVAFTYMVRF…RKYFNNEFIL (83 aa)).

Its function is as follows. This endonuclease is specific to the nrdD gene splice junction and is involved in intron homing. The sequence is that of Intron-associated endonuclease 2 (ITEVIIR) from Escherichia coli (Bacteriophage T4).